We begin with the raw amino-acid sequence, 212 residues long: Thymidylate kinase (212 aa).

Position 10-17 (10-17 (GGEGSGKT)) interacts with ATP.

Belongs to the thymidylate kinase family.

The catalysed reaction is dTMP + ATP = dTDP + ADP. In terms of biological role, phosphorylation of dTMP to form dTDP in both de novo and salvage pathways of dTTP synthesis. In Marinomonas sp. (strain MWYL1), this protein is Thymidylate kinase.